The primary structure comprises 162 residues: Transcriptional regulator MraZ (162 aa).

SpoVT-AbrB domains are found at residues 11-62 (EHPS…GLSV) and 98-141 (AVEC…SRDT).

The protein belongs to the MraZ family. Forms oligomers.

It is found in the cytoplasm. Its subcellular location is the nucleoid. The polypeptide is Transcriptional regulator MraZ (Pelobacter propionicus (strain DSM 2379 / NBRC 103807 / OttBd1)).